The primary structure comprises 20 residues: Disintegrin (20 aa).

The Disintegrin domain maps to 1-20 (EAGEECDCGTPENPCCDAAT). 2 cysteine pairs are disulfide-bonded: Cys-6–Cys-15 and Cys-8–Cys-16.

This sequence belongs to the venom metalloproteinase (M12B) family. P-II subfamily. P-IIa sub-subfamily. Monomer. As to expression, expressed by the venom gland.

The protein resides in the secreted. Functionally, inhibits fibrinogen interaction with platelets. Acts by binding to alpha-IIb/beta-3 (ITGA2B/ITGB3) on the platelet surface and inhibits aggregation induced by ADP, thrombin, platelet-activating factor and collagen. The sequence is that of Disintegrin from Bothrops fonsecai (Fonseca's lancehead).